The sequence spans 329 residues: DNA-directed RNA polymerase subunit alpha (329 aa).

Residues 1–235 (MQGSVTEFLK…EQLDAFVDLR (235 aa)) are alpha N-terminal domain (alpha-NTD). The alpha C-terminal domain (alpha-CTD) stretch occupies residues 249–329 (FDPILLRPVD…NWPPASIAED (81 aa)).

The protein belongs to the RNA polymerase alpha chain family. In terms of assembly, homodimer. The RNAP catalytic core consists of 2 alpha, 1 beta, 1 beta' and 1 omega subunit. When a sigma factor is associated with the core the holoenzyme is formed, which can initiate transcription.

The catalysed reaction is RNA(n) + a ribonucleoside 5'-triphosphate = RNA(n+1) + diphosphate. Functionally, DNA-dependent RNA polymerase catalyzes the transcription of DNA into RNA using the four ribonucleoside triphosphates as substrates. The protein is DNA-directed RNA polymerase subunit alpha of Pasteurella multocida (strain Pm70).